Consider the following 79-residue polypeptide: Sec-independent protein translocase protein TatA (79 aa).

A helical transmembrane segment spans residues Met1–Gly21. The disordered stretch occupies residues Ala46–Arg79. A compositionally biased stretch (basic and acidic residues) spans Val66–Arg79.

Belongs to the TatA/E family. As to quaternary structure, the Tat system comprises two distinct complexes: a TatABC complex, containing multiple copies of TatA, TatB and TatC subunits, and a separate TatA complex, containing only TatA subunits. Substrates initially bind to the TatABC complex, which probably triggers association of the separate TatA complex to form the active translocon.

It is found in the cell inner membrane. Part of the twin-arginine translocation (Tat) system that transports large folded proteins containing a characteristic twin-arginine motif in their signal peptide across membranes. TatA could form the protein-conducting channel of the Tat system. The polypeptide is Sec-independent protein translocase protein TatA (Paraburkholderia phytofirmans (strain DSM 17436 / LMG 22146 / PsJN) (Burkholderia phytofirmans)).